Here is a 660-residue protein sequence, read N- to C-terminus: MRLNIHKYLFIGRNKADFFSASRELGVVEFISKKCFITTEQGHRFVECLKVFDHLEAEYSLEALEFVKDESVSVEDIVSEVLTLNKEIKGLLETVKALRKEIVRVKPLGAFSSSEIAELSRKTGISLRFFYRTHKDNEDLEEDSPNVFYLSTAYNFDYYLVLGVVDLPRDRYTEIEAPRSVNELQVDLANLQREIRNRSDRLCDLYAYRREVLRGLCNYDNEQRLHQAKECCEDLFDGKVFAVAGWVIVDRIKELQSLCNRYQIYMERVPVDPDETIPTYLENKGVGMMGEDLVQIYDTPAYSDKDPSTWVFFAFVLFFSMIVNDAGYGLLFLMSSLLFSWKFRRKMKFSKHLSRMLKMTAILGLGCICWGTTTTSFFGMSFSKTSVFREYSMTHVLALKKAEYYLQMRPKAYKELTNEYPSLKAIRDPKAFLLATEIGSAGIESRYVVYDKFIDNILMELALFIGVVHLSLGMLRYLRYRYSGIGWILFMVSAYLYVPIYLGTVSLIHYLFHVPYELGGQIGYYGMFGGIGLAVVLAMIQRSWRGVEEIISVIQVFSDVLSYLRIYALGLAGAMMGATFNQMGARLPMLLGSIVILLGHSVNIILSIMGGVIHGLRLNFIEWYHYSFDGGGRPLRPLRKIVCSEDAEASGIHLDNNSIV.

Transmembrane regions (helical) follow at residues 312-332 (FFAF…GLLF), 362-382 (ILGL…GMSF), 453-473 (FIDN…LSLG), 485-505 (IGWI…LGTV), 520-540 (GQIG…LAMI), 560-580 (VLSY…GATF), and 593-613 (SIVI…GGVI).

Belongs to the V-ATPase 116 kDa subunit family.

The protein localises to the cell membrane. Its function is as follows. Produces ATP from ADP in the presence of a proton gradient across the membrane. The protein is V-type ATP synthase subunit I (atpI) of Chlamydia pneumoniae (Chlamydophila pneumoniae).